Consider the following 308-residue polypeptide: Ribosomal RNA large subunit methyltransferase F (308 aa).

Belongs to the methyltransferase superfamily. METTL16/RlmF family.

The protein resides in the cytoplasm. The catalysed reaction is adenosine(1618) in 23S rRNA + S-adenosyl-L-methionine = N(6)-methyladenosine(1618) in 23S rRNA + S-adenosyl-L-homocysteine + H(+). Functionally, specifically methylates the adenine in position 1618 of 23S rRNA. The polypeptide is Ribosomal RNA large subunit methyltransferase F (Shigella flexneri serotype 5b (strain 8401)).